A 1209-amino-acid chain; its full sequence is Nitric oxide synthase (1209 aa).

Serine 103 contacts (6R)-L-erythro-5,6,7,8-tetrahydrobiopterin. Position 181 (cysteine 181) interacts with heme b. Positions 244, 353, 354, 358, and 363 each coordinate L-arginine. Residues tryptophan 444 and phenylalanine 457 each coordinate (6R)-L-erythro-5,6,7,8-tetrahydrobiopterin. Heme b is bound at residue tyrosine 472. Residues 491 to 511 (VHRKFHFKQIARAVKFTSKLF) are calmodulin-binding. The Flavodoxin-like domain maps to 521-723 (ATILYATETG…QFRAWSSKIF (203 aa)). Position 527–531 (527–531 (TETGK)) interacts with FMN. The disordered stretch occupies residues 603–622 (RGDGTSDLGSGTFKTPTPKS). Residue 669–700 (VFGLGSSAYPKFCHFGKTVDKILGDLGGERIL) participates in FMN binding. The FAD-binding FR-type domain maps to 776-1021 (KQLITCKVKE…IRRAPSFHMP (246 aa)). FAD-binding positions include 811–822 (YDPGDHVGVLAC) and 954–964 (LQPRFYSISSS). NADP(+)-binding positions include 1028–1147 (LILV…QQKL) and 1128–1143 (NGHFYVCGDCKMAEEV).

It belongs to the NOS family. It depends on heme b as a cofactor. FAD is required as a cofactor. The cofactor is FMN. Constitutively expressed at a low level in the larval fat body, hemocyte, Malpighian tubule, midgut, silk gland and adult antenna.

It carries out the reaction 2 L-arginine + 3 NADPH + 4 O2 + H(+) = 2 L-citrulline + 2 nitric oxide + 3 NADP(+) + 4 H2O. With respect to regulation, expression is dependent on and stimulated by NADPH, calcium, BH4 and calmodulin. The activity is not dependent on FAD and is not stimulated by its presence. Produces nitric oxide (NO) which is a messenger molecule with diverse functions throughout the body. Involved in the induction of immune gene expression. This Bombyx mori (Silk moth) protein is Nitric oxide synthase.